Consider the following 337-residue polypeptide: Glyceraldehyde-3-phosphate dehydrogenase (337 aa).

Residues 12 to 13 (RI), Asp-36, Arg-80, and Ser-122 contribute to the NAD(+) site. Residues 153-155 (SCT) and Thr-184 contribute to the D-glyceraldehyde 3-phosphate site. The active-site Nucleophile is Cys-154. Asn-185 is an NAD(+) binding site. D-glyceraldehyde 3-phosphate-binding positions include Arg-199, 212–213 (TG), and Arg-235. Asn-318 contributes to the NAD(+) binding site.

The protein belongs to the glyceraldehyde-3-phosphate dehydrogenase family. Homotetramer.

It is found in the cytoplasm. The catalysed reaction is D-glyceraldehyde 3-phosphate + phosphate + NAD(+) = (2R)-3-phospho-glyceroyl phosphate + NADH + H(+). Its pathway is carbohydrate degradation; glycolysis; pyruvate from D-glyceraldehyde 3-phosphate: step 1/5. In terms of biological role, catalyzes the oxidative phosphorylation of glyceraldehyde 3-phosphate (G3P) to 1,3-bisphosphoglycerate (BPG) using the cofactor NAD. The first reaction step involves the formation of a hemiacetal intermediate between G3P and a cysteine residue, and this hemiacetal intermediate is then oxidized to a thioester, with concomitant reduction of NAD to NADH. The reduced NADH is then exchanged with the second NAD, and the thioester is attacked by a nucleophilic inorganic phosphate to produce BPG. The chain is Glyceraldehyde-3-phosphate dehydrogenase (gap) from Zymomonas mobilis subsp. mobilis (strain ATCC 31821 / ZM4 / CP4).